The following is a 288-amino-acid chain: 33 kDa chaperonin (288 aa).

2 disulfides stabilise this stretch: Cys-233/Cys-235 and Cys-267/Cys-270.

This sequence belongs to the HSP33 family. In terms of processing, under oxidizing conditions two disulfide bonds are formed involving the reactive cysteines. Under reducing conditions zinc is bound to the reactive cysteines and the protein is inactive.

It is found in the cytoplasm. Functionally, redox regulated molecular chaperone. Protects both thermally unfolding and oxidatively damaged proteins from irreversible aggregation. Plays an important role in the bacterial defense system toward oxidative stress. The chain is 33 kDa chaperonin from Pasteurella multocida (strain Pm70).